The following is a 520-amino-acid chain: Ubiquitin carboxyl-terminal hydrolase 3 (520 aa).

Met1 carries the N-acetylmethionine modification. The segment at 1–121 adopts a UBP-type zinc-finger fold; sequence MECPHLSSSV…QKVREHLQNL (121 aa). The Zn(2+) site is built by Cys3, His5, Cys29, Cys32, Cys41, Cys44, Cys49, His56, His60, His82, Cys95, and Cys98. The region spanning 159–511 is the USP domain; it reads TGLRNLGNTC…KAYILFYVEH (353 aa). The active-site Nucleophile is the Cys168. The active-site Proton acceptor is the His471.

This sequence belongs to the peptidase C19 family. USP3 subfamily. As to quaternary structure, interacts (via UBP-type domain) with H2A; the interaction is less efficient than with monoubiquitinated H2A. In terms of tissue distribution, expressed in all tissues examined, with strongest expression in pancreas.

Its subcellular location is the nucleus. It localises to the cytoplasm. It carries out the reaction Thiol-dependent hydrolysis of ester, thioester, amide, peptide and isopeptide bonds formed by the C-terminal Gly of ubiquitin (a 76-residue protein attached to proteins as an intracellular targeting signal).. In terms of biological role, deubiquitinase that plays a role in several cellular processes including transcriptional regulation, cell cycle progression or innate immunity. In response to DNA damage, deubiquitinates monoubiquitinated target proteins such as histone H2A and H2AX and thereby counteracts RNF168- and RNF8-mediated ubiquitination. In turn, participates in the recruitment of DNA damage repair factors to DNA break sites. Required for proper progression through S phase and subsequent mitotic entry. Acts as a positive regulator of TP53 by deubiquitinating and stabilizing it to promote normal cell proliferation and transformation. Participates in establishing tolerance innate immune memory through non-transcriptional feedback. Mechanistically, negatively regulates TLR-induced NF-kappa-B signaling by targeting and removing the 'Lys-63'-linked polyubiquitin chains on MYD88. Negatively regulates the activation of type I interferon signaling by mediating 'Lys-63'-linked polyubiquitin chains on RIGI and IFIH1. Also deubiquinates ASC/PYCARD, the central adapter mediating the assembly and activation of most inflammasomes, and thereby promotes inflammasome activation. The sequence is that of Ubiquitin carboxyl-terminal hydrolase 3 (USP3) from Homo sapiens (Human).